The sequence spans 202 residues: NAD(P)H-quinone oxidoreductase chain 6 (202 aa).

Transmembrane regions (helical) follow at residues 9–29 (VVSF…VVLA), 32–52 (IVYS…MYLL), 61–81 (AQVL…IMLV), 98–118 (VLTA…VLAT), and 144–164 (FLLP…GAII).

This sequence belongs to the complex I subunit 6 family.

The protein resides in the membrane. It catalyses the reaction a plastoquinone + NADH + (n+1) H(+)(in) = a plastoquinol + NAD(+) + n H(+)(out). It carries out the reaction a plastoquinone + NADPH + (n+1) H(+)(in) = a plastoquinol + NADP(+) + n H(+)(out). NDH-1 shuttles electrons from NAD(P)H, via FMN and iron-sulfur (Fe-S) centers, to quinones in the respiratory chain. The immediate electron acceptor for the enzyme in this species is believed to be plastoquinone. Couples the redox reaction to proton translocation (for every two electrons transferred, four hydrogen ions are translocated across the cytoplasmic membrane), and thus conserves the redox energy in a proton gradient. The protein is NAD(P)H-quinone oxidoreductase chain 6 (ndhG) of Nostoc sp. (strain PCC 7120 / SAG 25.82 / UTEX 2576).